The primary structure comprises 354 residues: GRAM domain-containing protein 2A (354 aa).

Positions 1-29 (MTALSRSEATEEGGNQQMHRKTASLNSPV) are enriched in polar residues. The disordered stretch occupies residues 1–46 (MTALSRSEATEEGGNQQMHRKTASLNSPVSCKEKPDRVEEPPDYSL). A compositionally biased stretch (basic and acidic residues) spans 31–40 (CKEKPDRVEE). The region spanning 72–139 (QQYHKLFKDV…VSVQMIKKHK (68 aa)) is the GRAM domain. Residues 312–332 (LLKVFFVLICFLVMSSSYLAF) traverse the membrane as a helical segment.

The protein localises to the endoplasmic reticulum membrane. It is found in the cell membrane. Functionally, participates in the organization of endoplasmic reticulum-plasma membrane contact sites (EPCS) with pleiotropic functions including STIM1 recruitment and calcium homeostasis. Constitutive tether that co-localize with ESYT2/3 tethers at endoplasmic reticulum-plasma membrane contact sites in a phosphatidylinositol lipid-dependent manner. Pre-marks the subset of phosphtidylinositol 4,5-biphosphate (PI(4,5)P2)-enriched EPCS destined for the store operated calcium entry pathway (SOCE). This Homo sapiens (Human) protein is GRAM domain-containing protein 2A.